The primary structure comprises 278 residues: 4-deoxy-L-threo-5-hexosulose-uronate ketol-isomerase (278 aa).

Residues His196, His198, Glu203, and His245 each contribute to the Zn(2+) site.

Belongs to the KduI family. Zn(2+) is required as a cofactor.

It carries out the reaction 5-dehydro-4-deoxy-D-glucuronate = 3-deoxy-D-glycero-2,5-hexodiulosonate. It functions in the pathway glycan metabolism; pectin degradation; 2-dehydro-3-deoxy-D-gluconate from pectin: step 4/5. Functionally, catalyzes the isomerization of 5-dehydro-4-deoxy-D-glucuronate to 3-deoxy-D-glycero-2,5-hexodiulosonate. In Salmonella paratyphi A (strain ATCC 9150 / SARB42), this protein is 4-deoxy-L-threo-5-hexosulose-uronate ketol-isomerase.